We begin with the raw amino-acid sequence, 327 residues long: Methionyl-tRNA formyltransferase (327 aa).

118-121 (SLLP) lines the (6S)-5,6,7,8-tetrahydrofolate pocket.

It belongs to the Fmt family.

The catalysed reaction is L-methionyl-tRNA(fMet) + (6R)-10-formyltetrahydrofolate = N-formyl-L-methionyl-tRNA(fMet) + (6S)-5,6,7,8-tetrahydrofolate + H(+). In terms of biological role, attaches a formyl group to the free amino group of methionyl-tRNA(fMet). The formyl group appears to play a dual role in the initiator identity of N-formylmethionyl-tRNA by promoting its recognition by IF2 and preventing the misappropriation of this tRNA by the elongation apparatus. This is Methionyl-tRNA formyltransferase from Corynebacterium jeikeium (strain K411).